Consider the following 494-residue polypeptide: Nuclear distribution protein PAC1 (494 aa).

The region spanning 14–46 (QKNELDKSVLRYLNWNYKQTVRHEHAQDYESVR) is the LisH domain. Residues 90-123 (NSIVRLQKKIIELEQNTETLVSQIKDLNTQVSEL) adopt a coiled-coil conformation. WD repeat units lie at residues 153–192 (NVESSVTSVKLHPNLPIVFVATDHGKLYAFDLFNYTIPLA), 196–244 (SHTK…CKFQ), 251–292 (GHEH…SLKT), 295–334 (PHSQWVRSIDVLGDYIISGSHDTTLRLTHWPSGNGLSVGT), 347–395 (HFIE…LMAH), 415–454 (GHLSWVRDISIRGQYLFSCADDKSVRCWDLNTGQCLHVWE), and 457–492 (HTGFVNCLDLDVDFDSNVTPRQMMVTGGLDCKSNVF).

It belongs to the WD repeat LIS1/nudF family. As to quaternary structure, self-associates. Interacts with NDL1 and dynein.

It is found in the cytoplasm. The protein localises to the cytoskeleton. It localises to the spindle pole. Its function is as follows. Positively regulates the activity of the minus-end directed microtubule motor protein dynein. Plays a central role in positioning the mitotic spindle at the bud neck during cell division. Targets cytoplasmic dynein to microtubule plus ends, thereby promoting dynein-mediated microtubule sliding along the bud cortex and consequently the movement of the mitotic spindle to the bud neck. This chain is Nuclear distribution protein PAC1, found in Saccharomyces cerevisiae (strain RM11-1a) (Baker's yeast).